A 473-amino-acid chain; its full sequence is 3-isopropylmalate dehydratase large subunit (473 aa).

[4Fe-4S] cluster-binding residues include cysteine 348, cysteine 413, and cysteine 416.

The protein belongs to the aconitase/IPM isomerase family. LeuC type 1 subfamily. In terms of assembly, heterodimer of LeuC and LeuD. [4Fe-4S] cluster is required as a cofactor.

It catalyses the reaction (2R,3S)-3-isopropylmalate = (2S)-2-isopropylmalate. It participates in amino-acid biosynthesis; L-leucine biosynthesis; L-leucine from 3-methyl-2-oxobutanoate: step 2/4. Catalyzes the isomerization between 2-isopropylmalate and 3-isopropylmalate, via the formation of 2-isopropylmaleate. The protein is 3-isopropylmalate dehydratase large subunit of Parvibaculum lavamentivorans (strain DS-1 / DSM 13023 / NCIMB 13966).